The following is a 291-amino-acid chain: MSRNYPRLDIETFGRHLITTGDLDPIYTALVRAEEAGDFSVPQLCRWLLGYWCYYHAGVASFLSEKEGEEFWHWMMVAARNEEETPAGGRWPRGHERRHYRAKIAVDSVTSLQARYGDRPENMALYVGARATEDERLPFRTVSARAQEHNGFGPWIGFKIADMMDRVMEVPVDFDNAAVFMFKDPEKAAMMLWEQREAHKYPENAKPKREAILSGVADYLIGRFADLAAPPLSDRPVNIQEVETVLCKWKSHMNGHYPLWNDIREINGGLEPWAGRCSAARAFLNHMPKEQ.

Residue glutamate 243 is part of the active site.

The protein belongs to the thymidine aminotransferase family.

It catalyses the reaction 5-phosphomethyl-dUMP in DNA + glycine = 5-N(alpha)-glycyl-dTMP in DNA + phosphate. Transfers glycine to 5-phosphomethyl-2'-deoxyuridine (5-PmdU) to produce 5-Nalpha-glycinylthymidine (Nalpha-GlyT) as a step in the pathway leading to thymidine hypermodifications in the viral genome. As a final result of the pathway of hypermodification, 5-aminoethyl-2'-deoxyuridine (5-NedU) substitutes for about 30% of thymidines in the viral DNA. These modifications probably prevent degradation of viral genome by the host restriction-modification antiviral defense system. The protein is Glycinyltransferase of Pseudomonas phage M6.